A 351-amino-acid polypeptide reads, in one-letter code: Very-long-chain 3-oxoacyl-CoA reductase (351 aa).

The helical transmembrane segment at 26 to 46 (LLWCAFTVGAVKLTTFMLSLI) threads the bilayer. The NADP(+) site is built by Leu72, Asp126, Asn153, Tyr225, Lys229, Val258, and Ser260. The active-site Proton donor is the Tyr225. Lys229 serves as the catalytic Lowers pKa of active site Tyr.

The protein belongs to the short-chain dehydrogenases/reductases (SDR) family.

The protein localises to the endoplasmic reticulum membrane. It carries out the reaction a very-long-chain (3R)-3-hydroxyacyl-CoA + NADP(+) = a very-long-chain 3-oxoacyl-CoA + NADPH + H(+). The protein operates within lipid metabolism; fatty acid biosynthesis. Its function is as follows. Component of the microsomal membrane bound fatty acid elongation system, which produces the 26-carbon very long-chain fatty acids (VLCFA) from palmitate. Catalyzes the reduction of the 3-ketoacyl-CoA intermediate that is formed in each cycle of fatty acid elongation. VLCFAs serve as precursors for ceramide and sphingolipids. The chain is Very-long-chain 3-oxoacyl-CoA reductase from Eremothecium gossypii (strain ATCC 10895 / CBS 109.51 / FGSC 9923 / NRRL Y-1056) (Yeast).